A 282-amino-acid polypeptide reads, in one-letter code: 2-dehydro-3-deoxyphosphooctonate aldolase (282 aa).

The protein belongs to the KdsA family.

The protein resides in the cytoplasm. It carries out the reaction D-arabinose 5-phosphate + phosphoenolpyruvate + H2O = 3-deoxy-alpha-D-manno-2-octulosonate-8-phosphate + phosphate. Its pathway is carbohydrate biosynthesis; 3-deoxy-D-manno-octulosonate biosynthesis; 3-deoxy-D-manno-octulosonate from D-ribulose 5-phosphate: step 2/3. It participates in bacterial outer membrane biogenesis; lipopolysaccharide biosynthesis. The polypeptide is 2-dehydro-3-deoxyphosphooctonate aldolase (Shewanella halifaxensis (strain HAW-EB4)).